Consider the following 218-residue polypeptide: Riboflavin kinase (218 aa).

A disordered region spans residues 1–27; sequence MRPDGPRDPVAGPDSGPEPPYPVRLSG. Mg(2+)-binding residues include T44 and N46. The active-site Nucleophile is E120.

It belongs to the flavokinase family. The cofactor is Zn(2+). Mg(2+) is required as a cofactor.

It carries out the reaction riboflavin + ATP = FMN + ADP + H(+). Its pathway is cofactor biosynthesis; FMN biosynthesis; FMN from riboflavin (ATP route): step 1/1. Catalyzes the phosphorylation of riboflavin (vitamin B2) to form flavin mononucleotide (FMN) coenzyme. The protein is Riboflavin kinase (fmn1) of Neosartorya fischeri (strain ATCC 1020 / DSM 3700 / CBS 544.65 / FGSC A1164 / JCM 1740 / NRRL 181 / WB 181) (Aspergillus fischerianus).